The sequence spans 197 residues: Large ribosomal subunit protein bL25 (197 aa).

This sequence belongs to the bacterial ribosomal protein bL25 family. CTC subfamily. In terms of assembly, part of the 50S ribosomal subunit; part of the 5S rRNA/L5/L18/L25 subcomplex. Contacts the 5S rRNA. Binds to the 5S rRNA independently of L5 and L18.

Its function is as follows. This is one of the proteins that binds to the 5S RNA in the ribosome where it forms part of the central protuberance. This chain is Large ribosomal subunit protein bL25, found in Lawsonia intracellularis (strain PHE/MN1-00).